The primary structure comprises 469 residues: UDP-glycosyltransferase 75B1 (469 aa).

The active-site Proton acceptor is H16. H16 contributes to the an anthocyanidin binding site. Positions 334, 349, 352, 354, 357, 373, and 374 each coordinate UDP-alpha-D-glucose.

This sequence belongs to the UDP-glycosyltransferase family. In terms of assembly, interacts with CALS1, ROP1 and phragmoplastin.

It localises to the cytoplasm. The protein localises to the perinuclear region. Its subcellular location is the cytoskeleton. The protein resides in the phragmoplast. It catalyses the reaction (indol-3-yl)acetate + UDP-alpha-D-glucose = 1-O-(indol-3-ylacetyl)-beta-D-glucose + UDP. Its pathway is plant hormone metabolism; auxin conjugation. In terms of biological role, possesses low catalytic activity on indole-3-acetic acid (IAA) in vitro. May transfer UDP-glucose from sucrose synthase to callose synthase for the synthesis of callose at the forming cell plate during cytokinesis. Has high affinity for 4-aminobenzoate. Catalyzes the formation of 4-aminobenzoate glucose ester which represents a storage form of 4-aminobenzoate in the vacuole. Is the major source of this activity in the plant. Also active in vitro on benzoates and benzoate derivatives. This Arabidopsis thaliana (Mouse-ear cress) protein is UDP-glycosyltransferase 75B1 (UGT75B1).